We begin with the raw amino-acid sequence, 2067 residues long: Non-reducing polyketide synthase PKS12 (2067 aa).

The tract at residues 4 to 241 is N-terminal acylcarrier protein transacylase (SAT) domain; the sequence is FVFGDQSTRF…LPVPIYAPYH (238 aa). The interval 350–373 is disordered; that stretch reads NSMGPKASTSHSSAETQTESSSKN. Residues 356-373 are compositionally biased toward polar residues; the sequence is ASTSHSSAETQTESSSKN. Positions 373-808 constitute a Ketosynthase family 3 (KS3) domain; that stretch reads NSKIAIVAMS…GGNSAVLLQD (436 aa). Active-site for beta-ketoacyl synthase activity residues include Cys545, His680, and His725. The segment at 912–1199 is malonyl-CoA:ACP transacylase (MAT) domain; that stretch reads FVFSGQGAQY…VVCSTFLKSS (288 aa). The For acyl/malonyl transferase activity role is filled by Ser1001. An N-terminal hotdog fold region spans residues 1297–1433; the sequence is QKILQETSLD…CELRLEHPSQ (137 aa). The PKS/mFAS DH domain maps to 1297 to 1606; sequence QKILQETSLD…FQGLPRRVLN (310 aa). The Proton acceptor; for dehydratase activity role is filled by His1329. The tract at residues 1329–1604 is product template (PT) domain; that stretch reads HRVNGVKVCT…ITFQGLPRRV (276 aa). Residues 1460-1606 form a C-terminal hotdog fold region; sequence LDSMLATGMV…FQGLPRRVLN (147 aa). Residue Asp1519 is the Proton donor; for dehydratase activity of the active site. The segment at 1619-1648 is disordered; that stretch reads APMGRRDVPPSRMDVPPVRSGEGPPTSAPT. Residues 1660-1738 form the Carrier domain; sequence TSMDSRLRPL…SFKLFLGLVD (79 aa). Position 1698 is an O-(pantetheine 4'-phosphoryl)serine (Ser1698). The interval 1742-1779 is disordered; the sequence is KSSSGSDGSGRSSPAPGIESGATTPPMSEEDQDKIVSS. Residues 1743–1754 are compositionally biased toward low complexity; that stretch reads SSSGSDGSGRSS. The segment at 1781-2065 is claisen cyclase domain; the sequence is SLHQFQASST…YVSAFLARAL (285 aa). Ser1875 serves as the catalytic For Claisen cyclase activity.

The enzyme catalyses 6 malonyl-CoA + acetyl-CoA + 6 H(+) = naphtopyrone YWA1 + 6 CO2 + 7 CoA + H2O. Its pathway is pigment biosynthesis. Functionally, non-reducing polyketide synthase; part of the gene cluster that mediates the biosynthesis of aurofusarin, a red mycelium pigment which is acting as a mycotoxin. The first step is performed by the polyketide synthase which condenses one acetyl-CoA and 6 malonyl-CoA units to form the first intermediate, the cyclic heptaketide and yellow pigment YWA1. The C2 hydroxyl group in the pyrone ring of YWA1 is probably formed during ring closure by an aldol-type cyclization reaction. The dehydratase aurZ then acts as the first tailoring enzyme in the aurofusarin biosynthetic pathway by converting YWA1 to nor-rubrofusarin. Nor-rubrofusarin is then methylated to rubrofusarin by the O-methyltransferase aurJ. Rubrofusarin is then transported across the plasma membrane by the rubrofusarin-specific pump aurT for further enzymatic processing by the extracellular complex composed of GIP1, aurF, aurO and aurS to yield aurofusarin. The chain is Non-reducing polyketide synthase PKS12 from Gibberella zeae (strain ATCC MYA-4620 / CBS 123657 / FGSC 9075 / NRRL 31084 / PH-1) (Wheat head blight fungus).